Consider the following 188-residue polypeptide: Protein-L-isoaspartate O-methyltransferase (188 aa).

The active site involves Ser-33.

The protein belongs to the methyltransferase superfamily. L-isoaspartyl/D-aspartyl protein methyltransferase family.

It localises to the cytoplasm. The enzyme catalyses [protein]-L-isoaspartate + S-adenosyl-L-methionine = [protein]-L-isoaspartate alpha-methyl ester + S-adenosyl-L-homocysteine. Functionally, catalyzes the methyl esterification of L-isoaspartyl residues in peptides and proteins that result from spontaneous decomposition of normal L-aspartyl and L-asparaginyl residues. It plays a role in the repair and/or degradation of damaged proteins. The protein is Protein-L-isoaspartate O-methyltransferase of Methanocella arvoryzae (strain DSM 22066 / NBRC 105507 / MRE50).